The sequence spans 1049 residues: Ataxin-2-like protein (1049 aa).

Residue methionine 1 is modified to N-acetylmethionine. Residues 1 to 54 (MLKPQPPQQTSQPQQPPPTQQAVARRSPGGTSPPNGGLPGPLTATAAPPGPPAA) are disordered. Residue serine 27 is modified to Phosphoserine. Phosphothreonine is present on threonine 45. Positions 96–119 (SVRGQTTGKGPPQSPVFEGVYNNS) are interaction with MPL. Phosphoserine is present on serine 109. The residue at position 116 (tyrosine 116) is a Phosphotyrosine. The Sm domain occupies 120-197 (RMLHFLTAVV…VLLVHFRNVD (78 aa)). Lysine 205 bears the N6-acetyllysine mark. Serine 236 bears the Phosphoserine mark. A Phosphotyrosine modification is found at tyrosine 262. Phosphoserine is present on serine 304. Tyrosine 307 carries the phosphotyrosine modification. Residues 314-326 (ENDDGRTEEEKHS) show a composition bias toward basic and acidic residues. Disordered regions lie at residues 314 to 522 (ENDD…RNLE), 554 to 573 (QFKL…FPSR), 578 to 704 (EAKG…LTAG), 736 to 772 (VSNS…PMMQ), 824 to 852 (SNPR…AEQP), 868 to 944 (HATQ…SSFP), and 999 to 1049 (PQGH…PPGN). Over residues 328–340 (VQRQGSGRESPSL) the composition is skewed to polar residues. 2 positions are modified to phosphoserine: serine 333 and serine 337. Residue lysine 346 forms a Glycyl lysine isopeptide (Lys-Gly) (interchain with G-Cter in SUMO2) linkage. Residue tyrosine 347 is modified to Phosphotyrosine. Arginine 359 carries the post-translational modification Asymmetric dimethylarginine. A compositionally biased stretch (low complexity) spans 361–378 (GVRCSSSRGGRPGLSSLP). Residues serine 389, serine 407, and serine 453 each carry the phosphoserine modification. The span at 454–466 (PKSAAPAPVSASC) shows a compositional bias: low complexity. A compositionally biased stretch (polar residues) spans 475–487 (VASSASIPVTSSV). 2 positions are modified to phosphoserine: serine 496 and serine 499. Residues 508–519 (DVKELPTKEPSR) are compositionally biased toward basic and acidic residues. 3 positions are modified to phosphoserine: serine 560, serine 561, and serine 562. The segment covering 578 to 587 (EAKGKEKEVD) has biased composition (basic and acidic residues). Serine 597 bears the Phosphoserine mark. Position 635 is a phosphothreonine (threonine 635). Phosphoserine is present on residues serine 637, serine 677, serine 683, and serine 687. The span at 681–697 (STSTPTSPGPRTHSTPS) shows a compositional bias: low complexity. 2 stretches are compositionally biased toward polar residues: residues 824–845 (SNPR…STPQ) and 878–902 (QPAT…QHQA). Over residues 935–944 (SAQSPQSSFP) the composition is skewed to low complexity. Residues 1033-1042 (QVQSHPSQQL) are compositionally biased toward polar residues.

This sequence belongs to the ataxin-2 family. As to quaternary structure, interacts with MPL/TPOR and EPOR and dissociates after ligand stimulation. Interacts with DDX6, G3BP, and ATXN2. Interacts with PRMT1. Interacts with CIC and ATXN1. Thrombopoietin triggers the phosphorylation on tyrosine residues in a way that is dependent on MPL C-terminal domain. Post-translationally, asymmetrically dimethylated. Probably methylated by PRMT1. As to expression, expressed in cerebellum.

It is found in the membrane. Its subcellular location is the cytoplasm. The protein resides in the nucleus speckle. It localises to the cytoplasmic granule. Its function is as follows. Involved in the regulation of stress granule and P-body formation. This Mus musculus (Mouse) protein is Ataxin-2-like protein (Atxn2l).